Reading from the N-terminus, the 123-residue chain is Large ribosomal subunit protein bL12 (123 aa).

The protein belongs to the bacterial ribosomal protein bL12 family. Homodimer. Part of the ribosomal stalk of the 50S ribosomal subunit. Forms a multimeric L10(L12)X complex, where L10 forms an elongated spine to which 2 to 4 L12 dimers bind in a sequential fashion. Binds GTP-bound translation factors.

Functionally, forms part of the ribosomal stalk which helps the ribosome interact with GTP-bound translation factors. Is thus essential for accurate translation. The polypeptide is Large ribosomal subunit protein bL12 (Marinomonas sp. (strain MWYL1)).